The sequence spans 75 residues: Putative defensin-like protein 119 (75 aa).

The signal sequence occupies residues 1 to 25 (MAKSTIFAIFMIVFVLGMVTKETKG). 4 disulfides stabilise this stretch: C29–C73, C39–C58, C44–C67, and C48–C69.

This sequence belongs to the DEFL family.

It is found in the secreted. In Arabidopsis thaliana (Mouse-ear cress), this protein is Putative defensin-like protein 119 (LCR53).